Here is a 386-residue protein sequence, read N- to C-terminus: Tryptophan--tRNA ligase (386 aa).

Residues 82 to 90 (PSGPMHIGH) carry the 'HIGH' region motif. The 'KMSKS' region signature appears at 253–257 (KMSAS).

Belongs to the class-I aminoacyl-tRNA synthetase family.

It localises to the cytoplasm. It catalyses the reaction tRNA(Trp) + L-tryptophan + ATP = L-tryptophyl-tRNA(Trp) + AMP + diphosphate + H(+). In Pyrococcus horikoshii (strain ATCC 700860 / DSM 12428 / JCM 9974 / NBRC 100139 / OT-3), this protein is Tryptophan--tRNA ligase.